The chain runs to 872 residues: DNA mismatch repair protein MutS (872 aa).

ATP is bound at residue 622 to 629; the sequence is GPNMAGKS.

It belongs to the DNA mismatch repair MutS family.

In terms of biological role, this protein is involved in the repair of mismatches in DNA. It is possible that it carries out the mismatch recognition step. This protein has a weak ATPase activity. The protein is DNA mismatch repair protein MutS of Geotalea uraniireducens (strain Rf4) (Geobacter uraniireducens).